A 314-amino-acid chain; its full sequence is Cytochrome f (314 aa).

The signal sequence occupies residues 1–29; sequence MTRSISISVLIISVLIMIYVITRTSISNA. Heme-binding residues include Tyr30, Cys50, Cys53, and His54. The helical transmembrane segment at 280 to 300 threads the bilayer; sequence VQGLLFFLASVILAQIFLVLK.

It belongs to the cytochrome f family. In terms of assembly, the 4 large subunits of the cytochrome b6-f complex are cytochrome b6, subunit IV (17 kDa polypeptide, petD), cytochrome f and the Rieske protein, while the 4 small subunits are PetG, PetL, PetM and PetN. The complex functions as a dimer. The cofactor is heme.

It is found in the plastid. The protein resides in the chloroplast thylakoid membrane. Its function is as follows. Component of the cytochrome b6-f complex, which mediates electron transfer between photosystem II (PSII) and photosystem I (PSI), cyclic electron flow around PSI, and state transitions. In Illicium oligandrum (Star anise), this protein is Cytochrome f.